Reading from the N-terminus, the 256-residue chain is 3-deoxy-manno-octulosonate cytidylyltransferase (256 aa).

The protein belongs to the KdsB family.

The protein localises to the cytoplasm. The enzyme catalyses 3-deoxy-alpha-D-manno-oct-2-ulosonate + CTP = CMP-3-deoxy-beta-D-manno-octulosonate + diphosphate. Its pathway is nucleotide-sugar biosynthesis; CMP-3-deoxy-D-manno-octulosonate biosynthesis; CMP-3-deoxy-D-manno-octulosonate from 3-deoxy-D-manno-octulosonate and CTP: step 1/1. The protein operates within bacterial outer membrane biogenesis; lipopolysaccharide biosynthesis. In terms of biological role, activates KDO (a required 8-carbon sugar) for incorporation into bacterial lipopolysaccharide in Gram-negative bacteria. This chain is 3-deoxy-manno-octulosonate cytidylyltransferase, found in Histophilus somni (strain 129Pt) (Haemophilus somnus).